The following is a 430-amino-acid chain: Adenylosuccinate synthetase (430 aa).

GTP contacts are provided by residues 12 to 18 and 40 to 42; these read GDEGKGK and GHT. D13 functions as the Proton acceptor in the catalytic mechanism. Positions 13 and 40 each coordinate Mg(2+). IMP is bound by residues 13 to 16, 38 to 41, T128, R142, Q223, T238, and R302; these read DEGK and NAGH. Residue H41 is the Proton donor of the active site. Residues 330 to 332 and 412 to 414 contribute to the GTP site; these read SID and SVG.

The protein belongs to the adenylosuccinate synthetase family. As to quaternary structure, homodimer. Requires Mg(2+) as cofactor.

The protein localises to the cytoplasm. It catalyses the reaction IMP + L-aspartate + GTP = N(6)-(1,2-dicarboxyethyl)-AMP + GDP + phosphate + 2 H(+). The protein operates within purine metabolism; AMP biosynthesis via de novo pathway; AMP from IMP: step 1/2. Its function is as follows. Plays an important role in the de novo pathway of purine nucleotide biosynthesis. Catalyzes the first committed step in the biosynthesis of AMP from IMP. In Bacillus subtilis (strain 168), this protein is Adenylosuccinate synthetase.